The chain runs to 127 residues: SH2 domain-containing protein 1A (127 aa).

Residues 6-102 (VYHGKISRET…GIVIPLQYPV (97 aa)) enclose the SH2 domain. The segment at 67–92 (ETAPGVHKRYFRKIKNLISAFQKPDQ) is interaction with FYN SH3 domain. Lys89 is subject to N6-acetyllysine. The disordered stretch occupies residues 104-127 (KSSPRSTQGTTGIREDPDVCLKAP). Residues 116 to 127 (IREDPDVCLKAP) are compositionally biased toward basic and acidic residues.

In terms of assembly, interacts with CD84, CD244, LY9, SLAMF1 and FYN. Interacts with NTRK1, NTRK2 and NTRK3.

Its subcellular location is the cytoplasm. Its function is as follows. Cytoplasmic adapter regulating receptors of the signaling lymphocytic activation molecule (SLAM) family such as SLAMF1, CD244, LY9, CD84, SLAMF6 and SLAMF7. In SLAM signaling seems to cooperate with SH2D1B/EAT-2. Initially it has been proposed that association with SLAMF1 prevents SLAMF1 binding to inhibitory effectors including INPP5D/SHIP1 and PTPN11/SHP-2. However, by simultaneous interactions, recruits FYN which subsequently phosphorylates and activates SLAMF1. Positively regulates CD244/2B4- and CD84-mediated natural killer (NK) cell functions. Can also promote CD48-, SLAMF6 -, LY9-, and SLAMF7-mediated NK cell activation. In the context of NK cell-mediated cytotoxicity enhances conjugate formation with target cells. May also regulate the activity of the neurotrophin receptors NTRK1, NTRK2 and NTRK3. The sequence is that of SH2 domain-containing protein 1A (SH2D1A) from Saguinus oedipus (Cotton-top tamarin).